Reading from the N-terminus, the 689-residue chain is Glycine--tRNA ligase beta subunit (689 aa).

Belongs to the class-II aminoacyl-tRNA synthetase family. In terms of assembly, tetramer of two alpha and two beta subunits.

Its subcellular location is the cytoplasm. It catalyses the reaction tRNA(Gly) + glycine + ATP = glycyl-tRNA(Gly) + AMP + diphosphate. This Escherichia coli O8 (strain IAI1) protein is Glycine--tRNA ligase beta subunit.